A 214-amino-acid polypeptide reads, in one-letter code: Alpha-S1-casein (214 aa).

The signal sequence occupies residues 1–15; sequence MKLLILTCLVAVALA. S27 is subject to Phosphoserine; in allele A. S56 carries the post-translational modification Phosphoserine; in allele C. S61 and S63 each carry phosphoserine. Residues 69–91 are disordered; it reads MEDAKQMKAGSSSSSEEIVPNSA. S79 is modified (phosphoserine; in alleles A and C). Position 80 is a phosphoserine (S80). Position 81 is a phosphoserine; in alleles A and C (S81). Residue S82 is modified to Phosphoserine. A Phosphoserine; in alleles A and C modification is found at S83. The residue at position 90 (S90) is a Phosphoserine. Residues 105 to 111 are opioid-like peptide sequence; that stretch reads RYLGYLE. Position 130 is a phosphoserine (S130).

The protein belongs to the alpha-casein family. In terms of tissue distribution, mammary gland specific. Secreted in milk.

It localises to the secreted. In terms of biological role, important role in the capacity of milk to transport calcium phosphate. The protein is Alpha-S1-casein (CSN1S1) of Ovis aries (Sheep).